Reading from the N-terminus, the 274-residue chain is MSRPILVFDSGIGGLSVLAEIRKSLPHSDYCYLFDNARLPYGELEEQVLIAGCVALVCDLVARTNAMIVVVACNTASTVVLPALRANLSIPVVGVVPAIKPAAQMSKSKRIGLLATPGTVKRHYTHELISQFADDCHVELFGCSELVMMAEQKIATGQMDMHRLADLLAPVVAAQLDVLVLGCTHFPMIQAELQQVLGAGVTLMDSGAAIAKRVVTLLTQQNLIVEERRVTNERETLGESAMQAFYTKAEISEGLTTTLIDCGFSTIERITTTN.

Substrate is bound by residues Asp-9 to Ser-10 and Tyr-41 to Gly-42. The Proton donor/acceptor role is filled by Cys-73. Asn-74–Thr-75 is a substrate binding site. The active-site Proton donor/acceptor is the Cys-183. Thr-184–His-185 contacts substrate.

The protein belongs to the aspartate/glutamate racemases family.

It catalyses the reaction L-glutamate = D-glutamate. It participates in cell wall biogenesis; peptidoglycan biosynthesis. Provides the (R)-glutamate required for cell wall biosynthesis. The sequence is that of Glutamate racemase from Shewanella baltica (strain OS155 / ATCC BAA-1091).